Consider the following 312-residue polypeptide: DNA-directed RNA polymerase subunit alpha (312 aa).

Residues 1 to 226 (MIEFEKPNIT…EHFKVFESAD (226 aa)) form an alpha N-terminal domain (alpha-NTD) region. The interval 243–312 (KEKKLEMTIE…DLGLSLRQED (70 aa)) is alpha C-terminal domain (alpha-CTD).

The protein belongs to the RNA polymerase alpha chain family. As to quaternary structure, homodimer. The RNAP catalytic core consists of 2 alpha, 1 beta, 1 beta' and 1 omega subunit. When a sigma factor is associated with the core the holoenzyme is formed, which can initiate transcription.

It carries out the reaction RNA(n) + a ribonucleoside 5'-triphosphate = RNA(n+1) + diphosphate. In terms of biological role, DNA-dependent RNA polymerase catalyzes the transcription of DNA into RNA using the four ribonucleoside triphosphates as substrates. The sequence is that of DNA-directed RNA polymerase subunit alpha from Lactobacillus acidophilus (strain ATCC 700396 / NCK56 / N2 / NCFM).